Reading from the N-terminus, the 236-residue chain is Leucyl/phenylalanyl-tRNA--protein transferase (236 aa).

The protein belongs to the L/F-transferase family.

It localises to the cytoplasm. It catalyses the reaction N-terminal L-lysyl-[protein] + L-leucyl-tRNA(Leu) = N-terminal L-leucyl-L-lysyl-[protein] + tRNA(Leu) + H(+). It carries out the reaction N-terminal L-arginyl-[protein] + L-leucyl-tRNA(Leu) = N-terminal L-leucyl-L-arginyl-[protein] + tRNA(Leu) + H(+). The catalysed reaction is L-phenylalanyl-tRNA(Phe) + an N-terminal L-alpha-aminoacyl-[protein] = an N-terminal L-phenylalanyl-L-alpha-aminoacyl-[protein] + tRNA(Phe). In terms of biological role, functions in the N-end rule pathway of protein degradation where it conjugates Leu, Phe and, less efficiently, Met from aminoacyl-tRNAs to the N-termini of proteins containing an N-terminal arginine or lysine. In Shewanella sp. (strain ANA-3), this protein is Leucyl/phenylalanyl-tRNA--protein transferase.